The following is a 224-amino-acid chain: ATP synthase subunit a (224 aa).

Transmembrane regions (helical) follow at residues 17–37 (LSLNWLSTFLGLLMIPSIYWL), 72–92 (IFISLFSLILFNNFMGLFPYI), 99–119 (LTLTLSLALPLWLCFMLYGWI), 125–145 (MFAHLVPQGTPAILMPFMVCI), 155–175 (GTLAVRLTANMIAGHLLLTLL), and 184–204 (YLLVTFLLVAQIALLVLESAV).

Belongs to the ATPase A chain family. In terms of assembly, F-type ATPases have 2 components, CF(1) - the catalytic core - and CF(0) - the membrane proton channel. CF(1) has five subunits: alpha(3), beta(3), gamma(1), delta(1), epsilon(1). CF(0) has three main subunits: a, b and c.

Its subcellular location is the mitochondrion inner membrane. Mitochondrial membrane ATP synthase (F(1)F(0) ATP synthase or Complex V) produces ATP from ADP in the presence of a proton gradient across the membrane which is generated by electron transport complexes of the respiratory chain. F-type ATPases consist of two structural domains, F(1) - containing the extramembraneous catalytic core and F(0) - containing the membrane proton channel, linked together by a central stalk and a peripheral stalk. During catalysis, ATP synthesis in the catalytic domain of F(1) is coupled via a rotary mechanism of the central stalk subunits to proton translocation. Key component of the proton channel; it may play a direct role in the translocation of protons across the membrane. In Drosophila yakuba (Fruit fly), this protein is ATP synthase subunit a (mt:ATPase6).